We begin with the raw amino-acid sequence, 274 residues long: NAD kinase (274 aa).

The Proton acceptor role is filled by D61. Residues 61–62, K66, 134–135, K145, D164, and 175–180 each bind NAD(+); these read DG, ND, and TAYSLS.

This sequence belongs to the NAD kinase family. It depends on a divalent metal cation as a cofactor.

The protein resides in the cytoplasm. It catalyses the reaction NAD(+) + ATP = ADP + NADP(+) + H(+). Its function is as follows. Involved in the regulation of the intracellular balance of NAD and NADP, and is a key enzyme in the biosynthesis of NADP. Catalyzes specifically the phosphorylation on 2'-hydroxyl of the adenosine moiety of NAD to yield NADP. This is NAD kinase from Clostridium tetani (strain Massachusetts / E88).